A 191-amino-acid polypeptide reads, in one-letter code: UPF0149 protein VV2847 (191 aa).

Belongs to the UPF0149 family.

The protein is UPF0149 protein VV2847 of Vibrio vulnificus (strain YJ016).